Consider the following 511-residue polypeptide: Putative thymidine phosphorylase 1 (511 aa).

Belongs to the thymidine/pyrimidine-nucleoside phosphorylase family. Type 2 subfamily.

The enzyme catalyses thymidine + phosphate = 2-deoxy-alpha-D-ribose 1-phosphate + thymine. In Acidovorax sp. (strain JS42), this protein is Putative thymidine phosphorylase 1.